A 156-amino-acid polypeptide reads, in one-letter code: Glutamine--fructose-6-phosphate aminotransferase [isomerizing] (156 aa).

One can recognise an SIS domain in the interval 4–146 (MAHHIVPARD…VLKGTDVDQP (143 aa)). Catalysis depends on Lys-151, which acts as the For Fru-6P isomerization activity.

Homodimer.

The protein localises to the cytoplasm. It catalyses the reaction D-fructose 6-phosphate + L-glutamine = D-glucosamine 6-phosphate + L-glutamate. Functionally, catalyzes the first step in hexosamine metabolism, converting fructose-6P into glucosamine-6P using glutamine as a nitrogen source. The polypeptide is Glutamine--fructose-6-phosphate aminotransferase [isomerizing] (glmS) (Sphingobium yanoikuyae (Sphingomonas yanoikuyae)).